The chain runs to 82 residues: Small ribosomal subunit protein bS16 (82 aa).

It belongs to the bacterial ribosomal protein bS16 family.

This is Small ribosomal subunit protein bS16 from Proteus mirabilis (strain HI4320).